The following is a 218-amino-acid chain: Large ribosomal subunit protein uL3 (218 aa).

The protein belongs to the universal ribosomal protein uL3 family. In terms of assembly, part of the 50S ribosomal subunit. Forms a cluster with proteins L14 and L19.

Functionally, one of the primary rRNA binding proteins, it binds directly near the 3'-end of the 23S rRNA, where it nucleates assembly of the 50S subunit. In Corynebacterium urealyticum (strain ATCC 43042 / DSM 7109), this protein is Large ribosomal subunit protein uL3.